The following is a 197-amino-acid chain: MYEYIKGKYIDMYKDYIVIENNNIGYKIYTSGSTMAKLPSIGENIMLYTEQIVREDFIGVYGFLTKDELSMFKLLLTINGVGAKASLSLLSISNVSTLKYAIKMGDEKTITRAPGIGKKTAQRIILELKDKIEIDILEEDDEQIINKVTDDKKVLEAVAALVTLGYSEKEANKVINSCDKNNSLEQIIKEALKYLMK.

A domain I region spans residues 1 to 64; the sequence is MYEYIKGKYI…EDFIGVYGFL (64 aa). The interval 65–144 is domain II; it reads TKDELSMFKL…DILEEDDEQI (80 aa). Residues 145–149 form a flexible linker region; the sequence is INKVT. The segment at 149-197 is domain III; the sequence is TDDKKVLEAVAALVTLGYSEKEANKVINSCDKNNSLEQIIKEALKYLMK.

This sequence belongs to the RuvA family. Homotetramer. Forms an RuvA(8)-RuvB(12)-Holliday junction (HJ) complex. HJ DNA is sandwiched between 2 RuvA tetramers; dsDNA enters through RuvA and exits via RuvB. An RuvB hexamer assembles on each DNA strand where it exits the tetramer. Each RuvB hexamer is contacted by two RuvA subunits (via domain III) on 2 adjacent RuvB subunits; this complex drives branch migration. In the full resolvosome a probable DNA-RuvA(4)-RuvB(12)-RuvC(2) complex forms which resolves the HJ.

The protein resides in the cytoplasm. Functionally, the RuvA-RuvB-RuvC complex processes Holliday junction (HJ) DNA during genetic recombination and DNA repair, while the RuvA-RuvB complex plays an important role in the rescue of blocked DNA replication forks via replication fork reversal (RFR). RuvA specifically binds to HJ cruciform DNA, conferring on it an open structure. The RuvB hexamer acts as an ATP-dependent pump, pulling dsDNA into and through the RuvAB complex. HJ branch migration allows RuvC to scan DNA until it finds its consensus sequence, where it cleaves and resolves the cruciform DNA. The sequence is that of Holliday junction branch migration complex subunit RuvA from Clostridium botulinum (strain Kyoto / Type A2).